The chain runs to 699 residues: Elongation factor G (699 aa).

One can recognise a tr-type G domain in the interval 8–283 (EHIRNIGICA…AVVDFLPSPI (276 aa)). GTP is bound by residues 17–24 (AHIDAGKT), 81–85 (DTPGH), and 135–138 (NKMD).

The protein belongs to the TRAFAC class translation factor GTPase superfamily. Classic translation factor GTPase family. EF-G/EF-2 subfamily.

It is found in the cytoplasm. Catalyzes the GTP-dependent ribosomal translocation step during translation elongation. During this step, the ribosome changes from the pre-translocational (PRE) to the post-translocational (POST) state as the newly formed A-site-bound peptidyl-tRNA and P-site-bound deacylated tRNA move to the P and E sites, respectively. Catalyzes the coordinated movement of the two tRNA molecules, the mRNA and conformational changes in the ribosome. The sequence is that of Elongation factor G from Rickettsia helvetica.